Here is a 349-residue protein sequence, read N- to C-terminus: UDP-N-acetylenolpyruvoylglucosamine reductase (349 aa).

The region spanning 25-197 is the FAD-binding PCMH-type domain; the sequence is GIDARARYAA…VSVTFRLPKR (173 aa). Arg-173 is a catalytic residue. Ser-249 acts as the Proton donor in catalysis. Residue Glu-345 is part of the active site.

It belongs to the MurB family. FAD serves as cofactor.

The protein resides in the cytoplasm. The enzyme catalyses UDP-N-acetyl-alpha-D-muramate + NADP(+) = UDP-N-acetyl-3-O-(1-carboxyvinyl)-alpha-D-glucosamine + NADPH + H(+). It participates in cell wall biogenesis; peptidoglycan biosynthesis. Its function is as follows. Cell wall formation. This Burkholderia multivorans (strain ATCC 17616 / 249) protein is UDP-N-acetylenolpyruvoylglucosamine reductase.